The chain runs to 810 residues: Protein kinase C-binding protein NELL1 (810 aa).

Positions 1–21 are cleaved as a signal peptide; sequence MPMDLILVVWFCVCTARTVVG. Residues Asn40, Asn53, Asn83, Asn224, Asn294, and Asn372 are each glycosylated (N-linked (GlcNAc...) asparagine). The Laminin G-like domain maps to 64 to 227; sequence EREIHAAPHV…TQCPNLNHTC (164 aa). The 62-residue stretch at 271-332 folds into the VWFC 1 domain; it reads KTCQVSGLLY…IAGQCCKVCR (62 aa). 3 disulfides stabilise this stretch: Cys395–Cys407, Cys401–Cys416, and Cys418–Cys432. Ca(2+) is bound by residues Asp434, Ile435, and Glu437. In terms of domain architecture, EGF-like 1; calcium-binding spans 434 to 475; that stretch reads DIDECAAKMHYCHANTVCVNLPGLYRCDCVPGYIRVDDFSCT. Intrachain disulfides connect Cys438–Cys451, Cys445–Cys460, Cys462–Cys474, Cys480–Cys493, Cys487–Cys502, Cys504–Cys515, Cys519–Cys529, Cys523–Cys535, Cys537–Cys546, Cys553–Cys566, Cys560–Cys575, Cys577–Cys594, Cys600–Cys613, Cys607–Cys622, and Cys624–Cys630. Ca(2+)-binding residues include Asn453, Leu454, and Leu457. The EGF-like 2; calcium-binding domain occupies 476–516; sequence EHDECGSGQHNCDENAICTNTVQGHSCTCKPGYVGNGTICR. N-linked (GlcNAc...) asparagine glycosylation is present at Asn511. One can recognise an EGF-like 3 domain in the interval 517–547; that stretch reads AFCEEGCRYGGTCVAPNKCVCPSGFTGSHCE. The region spanning 549–587 is the EGF-like 4; calcium-binding domain; that stretch reads DIDECSEGIIECHNHSRCVNLPGWYHCECRSGFHDDGTY. Asn562 carries an N-linked (GlcNAc...) asparagine glycan. Residues 596 to 631 form the EGF-like 5; calcium-binding domain; that stretch reads DIDECALRTHTCWNDSACINLAGGFDCLCPSGPSCS. An N-linked (GlcNAc...) asparagine glycan is attached at Asn609. A VWFC 2 domain is found at 692–750; that stretch reads SQCLDQNGHKLYRSGDNWTHSCQQCRCLEGEVDCWPLTCPNLSCEYTAILEGECCPRCV. Asn708, Asn732, and Asn758 each carry an N-linked (GlcNAc...) asparagine glycan.

As to quaternary structure, homotrimer. Binds to PKC beta-1. Interacts with ATRAID; the interaction promotes osteoblast cell differentiation and mineralization. Interacts with ROBO3.

Its subcellular location is the cytoplasm. The protein localises to the nucleus envelope. It localises to the secreted. Functionally, plays a role in the control of cell growth and differentiation. Promotes osteoblast cell differentiation and terminal mineralization. This is Protein kinase C-binding protein NELL1 (NELL1) from Homo sapiens (Human).